The chain runs to 211 residues: MRNELTAMPHAAPPPLLGVLLAGGRSSRMGTPKALLPHPSGGTFLTHSLDRLRLVCEEKIVVSLASEAHRAQVQLPPSVPALFDSQPALGPAMGVSVALQHASSNGFAGCLFTPVDLPDLSVDDLLSLVHAWRESPTQIVLAQQTDPERLQPLVGIYPVACMDSIQRVVESEHRSLYRSLRSSDHQTVAIPSTRLRNVNTPADLGPPFDST.

Residues 21–23, lysine 33, aspartate 84, and aspartate 116 each bind GTP; that span reads LAG. Mg(2+) is bound at residue aspartate 116.

The protein belongs to the MobA family. Mg(2+) is required as a cofactor.

Its subcellular location is the cytoplasm. The catalysed reaction is Mo-molybdopterin + GTP + H(+) = Mo-molybdopterin guanine dinucleotide + diphosphate. In terms of biological role, transfers a GMP moiety from GTP to Mo-molybdopterin (Mo-MPT) cofactor (Moco or molybdenum cofactor) to form Mo-molybdopterin guanine dinucleotide (Mo-MGD) cofactor. This is Probable molybdenum cofactor guanylyltransferase from Rhodopirellula baltica (strain DSM 10527 / NCIMB 13988 / SH1).